Consider the following 63-residue polypeptide: Large ribosomal subunit protein bL28 (63 aa).

This sequence belongs to the bacterial ribosomal protein bL28 family.

The protein is Large ribosomal subunit protein bL28 of Clostridium kluyveri (strain NBRC 12016).